A 140-amino-acid polypeptide reads, in one-letter code: Type II secretion system core protein G (140 aa).

Positions 1–6 (MQRQRG) are cleaved as a propeptide — leader sequence. Phe-7 bears the N-methylphenylalanine mark. Residues 7 to 27 (FTLLEIMVVIVILGVLASLVV) form a helical membrane-spanning segment. The tract at residues 120 to 140 (LGPDGVPESNDDIGNWTIGKK) is disordered.

This sequence belongs to the GSP G family. Type II secretion system is composed of four main components: the outer membrane complex, the inner membrane complex, the cytoplasmic secretion ATPase and the periplasm-spanning pseudopilus. Forms homomultimers. Cleaved by the prepilin peptidase. Post-translationally, methylated by prepilin peptidase at the amino group of the N-terminal phenylalanine once the leader sequence is cleaved.

It is found in the cell inner membrane. Its function is as follows. Core component of the type II secretion system required for the energy-dependent secretion of extracellular factors such as proteases and toxins from the periplasm. Pseudopilin (pilin-like) protein that polymerizes to form the pseudopilus. Further polymerization triggers pseudopilus growth. In Klebsiella pneumoniae, this protein is Type II secretion system core protein G (pulG).